Consider the following 198-residue polypeptide: QQRFFPQRYIELVIVADRRMYTKYNSDSNKIRTRVHELVNTVNGFFRSMNVDASLANLEVWSKKDLIKVEKDSSKTLTSFGEWRERDLLRRKSHDNAQLLTAIDFNGNTIGRAYLGSMCNPKRSVGIVQDHSPINLLVGVTMAHELGHNLGMEHDGKDCLCGASLCIMSPGLTDGPSYEFSDCSKDYYQTFLTNHNPQ.

Residues 8 to 198 (RYIELVIVAD…QTFLTNHNPQ (191 aa)) enclose the Peptidase M12B domain. 2 residues coordinate Ca(2+): glutamate 11 and aspartate 95. Histidine 144 contacts Zn(2+). Glutamate 145 is a catalytic residue. Zn(2+) contacts are provided by histidine 148 and histidine 154. 2 disulfide bridges follow: cysteine 159/cysteine 183 and cysteine 161/cysteine 166.

The protein belongs to the venom metalloproteinase (M12B) family. P-I subfamily. The cofactor is Zn(2+). Expressed by the venom gland.

It localises to the secreted. Inhibited by EDTA, EGTA and 1,10-phenanthroline, partially inhibited by beta-mercaptoethanol and not inhibited by serine protease inhibitors (leupeptin and aprotinin). Also inhibited by an excess of zinc, mercury and magnesium ions. Extracts of the plant Casearia mariquitensis neutralizes the decrease of platelets and plasma fibrinogen induced by the protease. The same extracts also partially inhibit Bbeta chain cleavage, but not Aalpha chain cleavage. In terms of biological role, this metalloprotease hydrolyzes the Aalpha chain of fibrin and fibrinogen first followed by the Bbeta chain and shows no effect on the gamma chain. It is also able to degrade type I collagen, fibronectin, laminin and induces inflammatory reaction. It is devoid of hemorrhagic and thrombotic activities, except in lung where it induces pulmonary bleeding. It also induces a mild myotoxic reaction. It is not able to inhibit platelet aggregation, but it induces decrease of platelets and plasma fibrinogen. It contributes to local tissue damage by inducing edema, inflammatory infiltrate and mild myotoxicity, and by degrading extracellular matrix components. The sequence is that of Snake venom metalloproteinase neuwiedase from Bothrops pauloensis (Neuwied's lancehead).